The primary structure comprises 500 residues: Chromosomal replication initiator protein DnaA (500 aa).

Residues 1–81 are domain I, interacts with DnaA modulators; the sequence is MVNASGDPVI…LQALRTVTGE (81 aa). The segment at 81–155 is domain II; sequence ENMFPAFKVV…QQKMNRDPET (75 aa). The tract at residues 156 to 377 is domain III, AAA+ region; it reads HLNKNFTFDS…GALTRVTAVA (222 aa). Residues G200, G202, K203, and T204 each coordinate ATP. Positions 378–500 are domain IV, binds dsDNA; sequence SLSNQPVTRA…TVRLKQSNTN (123 aa).

It belongs to the DnaA family. Oligomerizes as a right-handed, spiral filament on DNA at oriC.

It localises to the cytoplasm. Plays an essential role in the initiation and regulation of chromosomal replication. ATP-DnaA binds to the origin of replication (oriC) to initiate formation of the DNA replication initiation complex once per cell cycle. Binds the DnaA box (a 9 base pair repeat at the origin) and separates the double-stranded (ds)DNA. Forms a right-handed helical filament on oriC DNA; dsDNA binds to the exterior of the filament while single-stranded (ss)DNA is stabiized in the filament's interior. The ATP-DnaA-oriC complex binds and stabilizes one strand of the AT-rich DNA unwinding element (DUE), permitting loading of DNA polymerase. After initiation quickly degrades to an ADP-DnaA complex that is not apt for DNA replication. Binds acidic phospholipids. This is Chromosomal replication initiator protein DnaA from Bifidobacterium longum (strain DJO10A).